The primary structure comprises 87 residues: Colicin-E7 immunity protein (87 aa).

The protein belongs to the colicins ColE2/ColE8/ColE9 and pyocins S1/S2 family.

Its function is as follows. This protein is able to protect a cell, which harbors the plasmid ColE7 encoding colicin E7, against colicin E7, it binds specifically to the DNase-type colicin and inhibits its bactericidal activity. Dimeric ImmE7 may possess a RNase activity that cleaves its own mRNA at a specific site and thus autoregulates translational expression of the downstream ceiE7 gene as well as degradation of the upstream ceaE7 mRNA. The protein is Colicin-E7 immunity protein (imm) of Escherichia coli.